Reading from the N-terminus, the 606-residue chain is Polypeptide N-acetylgalactosaminyltransferase 9 (606 aa).

Over 1–6 (MAVARK) the chain is Cytoplasmic. A helical; Signal-anchor for type II membrane protein transmembrane segment spans residues 7–29 (IRTLLTVNILVFVGIVLFSVYCR). Residues 30 to 606 (LQGRSQELVR…IRNWIKHARH (577 aa)) lie on the Lumenal side of the membrane. The segment at 43-62 (GGCRPRPATPAPGSPLRSGG) is disordered. 2 cysteine pairs are disulfide-bonded: Cys144/Cys375 and Cys366/Cys445. The segment at 153-264 (LPQVSVVFIF…TGWAEPALSR (112 aa)) is catalytic subdomain A. Positions 194 and 225 each coordinate substrate. Mn(2+)-binding residues include Asp248, His250, and His380. The segment at 321 to 383 (PIRTPAMIGC…PCSRVAHIER (63 aa)) is catalytic subdomain B. Substrate contacts are provided by Arg383 and Tyr388. N-linked (GlcNAc...) asparagine glycosylation occurs at Asn463. The 137-residue stretch at 467-603 (TYGEVRNSKA…KWMIRNWIKH (137 aa)) folds into the Ricin B-type lectin domain. Disulfide bonds link Cys480–Cys496, Cys528–Cys543, and Cys570–Cys590.

This sequence belongs to the glycosyltransferase 2 family. GalNAc-T subfamily. Requires Mn(2+) as cofactor.

The protein localises to the golgi apparatus membrane. It catalyses the reaction L-seryl-[protein] + UDP-N-acetyl-alpha-D-galactosamine = a 3-O-[N-acetyl-alpha-D-galactosaminyl]-L-seryl-[protein] + UDP + H(+). The catalysed reaction is L-threonyl-[protein] + UDP-N-acetyl-alpha-D-galactosamine = a 3-O-[N-acetyl-alpha-D-galactosaminyl]-L-threonyl-[protein] + UDP + H(+). It functions in the pathway protein modification; protein glycosylation. Functionally, catalyzes the initial reaction in O-linked oligosaccharide biosynthesis, the transfer of an N-acetyl-D-galactosamine residue to a serine or threonine residue on the protein receptor. Does not glycosylate apomucin or SDC3. This Macaca fascicularis (Crab-eating macaque) protein is Polypeptide N-acetylgalactosaminyltransferase 9 (GALNT9).